The primary structure comprises 224 residues: Uridylate kinase (224 aa).

6-10 lines the ATP pocket; the sequence is KVTGK. G41 is a binding site for UMP. ATP is bound by residues G42 and R46. UMP contacts are provided by residues D63 and 111 to 117; that span reads FQPGQST. ATP is bound by residues T137, F143, and D146.

Belongs to the UMP kinase family. Homohexamer.

It is found in the cytoplasm. The enzyme catalyses UMP + ATP = UDP + ADP. It functions in the pathway pyrimidine metabolism; CTP biosynthesis via de novo pathway; UDP from UMP (UMPK route): step 1/1. With respect to regulation, inhibited by UTP. Functionally, catalyzes the reversible phosphorylation of UMP to UDP. The polypeptide is Uridylate kinase (Metallosphaera sedula (strain ATCC 51363 / DSM 5348 / JCM 9185 / NBRC 15509 / TH2)).